A 327-amino-acid chain; its full sequence is DNA-directed RNA polymerase subunit alpha (327 aa).

Residues 1–233 form an alpha N-terminal domain (alpha-NTD) region; the sequence is MQNVLKSFLT…HQLAAFVDLK (233 aa). Residues 247-327 form an alpha C-terminal domain (alpha-CTD) region; it reads VNPLLLRPVE…GWPPADLTDQ (81 aa).

Belongs to the RNA polymerase alpha chain family. Homodimer. The RNAP catalytic core consists of 2 alpha, 1 beta, 1 beta' and 1 omega subunit. When a sigma factor is associated with the core the holoenzyme is formed, which can initiate transcription.

The catalysed reaction is RNA(n) + a ribonucleoside 5'-triphosphate = RNA(n+1) + diphosphate. In terms of biological role, DNA-dependent RNA polymerase catalyzes the transcription of DNA into RNA using the four ribonucleoside triphosphates as substrates. The polypeptide is DNA-directed RNA polymerase subunit alpha (Coxiella burnetii (strain CbuK_Q154) (Coxiella burnetii (strain Q154))).